The primary structure comprises 962 residues: MTMAGGRRGLVAPQNTFLENIVRRSNDTNFVLGNAQIVDWPIVYSNDGFCKLSGYHRAEVMQKSSACSFMYGELTDKDTVEKVRQTFENYEMNSFEILMYKKNRTPVWFFVKIAPIRNEQDKVVLFLCTFSDITAFKQPIEDDSCKGWGKFARLTRALTSSRGVLQQLAPSVQKGENVHKHSRLAEVLQLGSDILPQYKQEAPKTPPHIILHYCVFKTTWDWIILILTFYTAILVPYNVSFKTRQNNVAWLVVDSIVDVIFLVDIVLNFHTTFVGPAGEVISDPKLIRMNYLKTWFVIDLLSCLPYDVINAFENVDEGISSLFSSLKVVRLLRLGRVARKLDHYIEYGAAVLVLLVCVFGLAAHWMACIWYSIGDYEIFDEDTKTIRNNSWLYQLALDIGTPYQFNGSGSGKWEGGPSKNSVYISSLYFTMTSLTSVGFGNIAPSTDIEKIFAVAIMMIGSLLYATIFGNVTTIFQQMYANTNRYHEMLNSVRDFLKLYQVPKGLSERVMDYIVSTWSMSRGIDTEKVLQICPKDMRADICVHLNRKVFKEHPAFRLASDGCLRALAMEFQTVHCAPGDLIYHAGESVDSLCFVVSGSLEVIQDDEVVAILGKGDVFGDVFWKEATLAQSCANVRALTYCDLHVIKRDALQKVLEFYTAFSHSFSRNLILTYNLRKRIVFRKISDVKREEEERMKRKNEAPLILPPDHPVRRLFQRFRQQKEARLAAERGGRDLDDLDVEKGNALTDHTSANHSLVKASVVTVRESPATPVSFQAASTSTVSDHAKLHAPGSECLGPKAGGGDPAKRKGWARFKDACGKGEDWNKVSKAESMETLPERTKASGEATLKKTDSCDSGITKSDLRLDNVGEARSPQDRSPILAEVKHSFYPIPEQTLQATVLEVKHELKEDIKALNAKMTSIEKQLSEILRILMSRGSSQSPQDTCEVSRPQSPESDRDIFGAS.

Topologically, residues 1–220 (MTMAGGRRGL…LHYCVFKTTW (220 aa)) are cytoplasmic. The region spanning 14–94 (QNTFLENIVR…QTFENYEMNS (81 aa)) is the PAS domain. One can recognise a PAC domain in the interval 93-145 (NSFEILMYKKNRTPVWFFVKIAPIRNEQDKVVLFLCTFSDITAFKQPIEDDSC). The segment at 151–162 (FARLTRALTSSR) is required for phosphatidylinositol bisphosphate binding. The helical transmembrane segment at 221-241 (DWIILILTFYTAILVPYNVSF) threads the bilayer. Residues 242-248 (KTRQNNV) are Extracellular-facing. A helical membrane pass occupies residues 249 to 269 (AWLVVDSIVDVIFLVDIVLNF). The Cytoplasmic segment spans residues 270 to 290 (HTTFVGPAGEVISDPKLIRMN). Residues 291-309 (YLKTWFVIDLLSCLPYDVI) traverse the membrane as a helical segment. The Extracellular segment spans residues 310-318 (NAFENVDEG). Residues 319–341 (ISSLFSSLKVVRLLRLGRVARKL) traverse the membrane as a helical; Voltage-sensor segment. Residues 342 to 350 (DHYIEYGAA) are Cytoplasmic-facing. A helical transmembrane segment spans residues 351–372 (VLVLLVCVFGLAAHWMACIWYS). Topologically, residues 373–421 (IGDYEIFDEDTKTIRNNSWLYQLALDIGTPYQFNGSGSGKWEGGPSKNS) are extracellular. N388 and N406 each carry an N-linked (GlcNAc...) asparagine glycan. An intramembrane region (pore-forming) is located at residues 422–443 (VYISSLYFTMTSLTSVGFGNIA). The Selectivity filter motif lies at 436-441 (SVGFGN). At 444–450 (PSTDIEK) the chain is on the extracellular side. A helical membrane pass occupies residues 451–471 (IFAVAIMMIGSLLYATIFGNV). The Cytoplasmic segment spans residues 472 to 962 (TTIFQQMYAN…ESDRDIFGAS (491 aa)). Residues 646-743 (KRDALQKVLE…LDDLDVEKGN (98 aa)) form a calmodulin-binding region. Residues 672 to 674 (YNL) are interaction with cyclic nucleotide-binding pocket. Basic and acidic residues predominate over residues 830–852 (ESMETLPERTKASGEATLKKTDS). Disordered stretches follow at residues 830 to 859 (ESME…GITK) and 933 to 962 (SRGS…FGAS). Positions 897 to 937 (ATVLEVKHELKEDIKALNAKMTSIEKQLSEILRILMSRGSS) are CAD (involved in subunit assembly). Over residues 934 to 952 (RGSSQSPQDTCEVSRPQSP) the composition is skewed to polar residues. Residues S947, S951, and S954 each carry the phosphoserine modification. A compositionally biased stretch (basic and acidic residues) spans 953 to 962 (ESDRDIFGAS).

Belongs to the potassium channel family. H (Eag) (TC 1.A.1.20) subfamily. Kv10.1/KCNH1 sub-subfamily. In terms of assembly, homomultimer. The potassium channel is composed of a homo- or heterotetrameric complex of pore-forming alpha subunits that can associate with modulating beta subunits. Heteromultimer with KCNH5/EAG2. Interacts with ALG10B. Interacts with RABEP1. Interacts (via C-terminus) with CTTN. Interacts (via cytoplasmic region) with Ca(2+)-bound calmodulin. In terms of processing, channel activity is regulated via tyrosine phosphorylation/dephosphorylation by SRC and PTPN6. In terms of tissue distribution, detected in cerebellum, at parallel fiber synapses on Purkinje cell spines. Detected in hippocampus neurons (at protein level). Detected in brain, but not in the other tissues tested; expression is highest in granular cells of the dentate gyrus, in hippocampus CA3 pyramidal cells, and in cerebellar granule cells. Detected in pituitary.

The protein resides in the cell membrane. It localises to the nucleus inner membrane. The protein localises to the cell projection. It is found in the dendrite. Its subcellular location is the axon. The protein resides in the presynaptic cell membrane. It localises to the perikaryon. The protein localises to the postsynaptic density membrane. It is found in the early endosome membrane. It carries out the reaction K(+)(in) = K(+)(out). Its activity is regulated as follows. Channel activity is inhibited by interaction with Ca(2+)-bound calmodulin. Interaction of a single pore-forming alpha subunit with a calmodulin chain is sufficient to promote channel closure. Channel activity is not regulated by cyclic nucleotides. Channel activity is inhibited by binding intracellular phosphatidylinositol-3,5-bisphosphate and phosphatidylinositol-4,5-bisphosphate (PIP2), but is not inhibited by phosphatidylinositol 4-phosphate. Functionally, pore-forming (alpha) subunit of a voltage-gated delayed rectifier potassium channel that mediates outward-rectifying potassium currents which, on depolarization, reaches a steady-state level and do not inactivate. The activation kinetics depend on the prepulse potential and external divalent cation concentration. With negative prepulses, the current activation is delayed and slowed down several fold, whereas more positive prepulses speed up activation. The time course of activation is biphasic with a fast and a slowly activating current component. Activates at more positive membrane potentials and exhibit a steeper activation curve. Channel properties are modulated by subunit assembly. Mediates IK(NI) current in myoblasts. Involved in the regulation of cell proliferation and differentiation, in particular adipogenic and osteogenic differentiation in bone marrow-derived mesenchymal stem cells (MSCs). In Rattus norvegicus (Rat), this protein is Voltage-gated delayed rectifier potassium channel KCNH1.